The primary structure comprises 184 residues: Histone H3-like centromeric protein CSE4 (184 aa).

The disordered stretch occupies residues 54–81; it reads YIQPERSASSQQIHPPEHHISAHERITK. Residues 68–80 show a composition bias toward basic and acidic residues; sequence PPEHHISAHERIT. Residues 82–182 form an H3-like region; it reads ARGTRYKPTD…MQLARRIRGQ (101 aa).

The protein belongs to the histone H3 family. Component of centromeric nucleosomes, where DNA is wrapped around a histone octamer core. The octamer contains two molecules each of H2A, H2B, CSE4/CENPA and H4 assembled in one CSE4-H4 heterotetramer and two H2A-H2B heterodimers. Interacts with the inner kinetochore. Post-translationally, ubiquitinated. Is degraded through ubiquitin-mediated proteolysis when not protected by its association to the kinetochore.

The protein resides in the nucleus. It localises to the chromosome. It is found in the centromere. Histone H3-like nucleosomal protein that is specifically found in centromeric nucleosomes. Replaces conventional H3 in the nucleosome core of centromeric chromatin that serves as an assembly site for the inner kinetochore. Required for recruitment and assembly of kinetochore proteins, mitotic progression and chromosome segregation. May serve as an epigenetic mark that propagates centromere identity through replication and cell division. This is Histone H3-like centromeric protein CSE4 (CSE4) from Kluyveromyces lactis (strain ATCC 8585 / CBS 2359 / DSM 70799 / NBRC 1267 / NRRL Y-1140 / WM37) (Yeast).